The following is a 767-amino-acid chain: ABC transporter B family member 4 (767 aa).

A disordered region spans residues 81-104 (NYSSSSNSGNNNNNNYNNKNNNNN). 5 helical membrane-spanning segments follow: residues 208 to 228 (IWLF…GLQI), 252 to 272 (AIFI…MISV), 324 to 344 (VSLG…LILI), 350 to 370 (LGMM…AGWL), and 429 to 449 (IGIF…LVYW). One can recognise an ABC transmembrane type-1 domain in the interval 211-491 (FGFGIITAFF…LSILFTQIMS (281 aa)). In terms of domain architecture, ABC transporter spans 524–760 (IKFINVDFKY…KGLYYKLVQR (237 aa)). An ATP-binding site is contributed by 559-566 (GSSGGGKS).

Belongs to the ABC transporter superfamily. ABCB family. Multidrug resistance exporter (TC 3.A.1.201) subfamily.

It localises to the membrane. This is ABC transporter B family member 4 (abcB4) from Dictyostelium discoideum (Social amoeba).